The following is a 251-amino-acid chain: 3-isopropylmalate dehydratase small subunit 1 (251 aa).

The transit peptide at M1–R59 directs the protein to the chloroplast.

Belongs to the LeuD family. As to quaternary structure, heterodimer of the large LEUC/IIL1 subunit and the small LEUD (SSU1, SSU2 or SSU3) subunits. In terms of tissue distribution, expressed at low levels in roots, root tips, at the basis of the hypocotyls, and in emerging leaves. In young seedlings, expressed in cotyledon epidermal cells. In hypocotyls, expressed in peripheral cells. In seedling roots, expressed in the epidermis, including root hairs, and throughout the cortex. In rosette leaves, expressed in the upper and lower epidermis. In roots of adult plants, expressed in the root tips and cortex of the mature root enclosing the stele. In flowering stalks, expressed in the epidermis. Expressed in the carpel epidermis.

It is found in the plastid. Its subcellular location is the chloroplast stroma. It carries out the reaction (2R,3S)-3-isopropylmalate = (2S)-2-isopropylmalate. It participates in amino-acid biosynthesis; L-leucine biosynthesis; L-leucine from 3-methyl-2-oxobutanoate: step 2/4. Catalyzes the isomerization between 2-isopropylmalate and 3-isopropylmalate, via the formation of 2-isopropylmaleate. Plays an essential role in leucine biosynthesis. Functions in both the biosynthesis of leucine, and in the methionine chain elongation pathway of aliphatic glucosinolate formation. Plays an essential role in female gametophyte development. This Arabidopsis thaliana (Mouse-ear cress) protein is 3-isopropylmalate dehydratase small subunit 1.